Here is a 692-residue protein sequence, read N- to C-terminus: NADH-ubiquinone oxidoreductase chain 5 (692 aa).

The next 17 helical transmembrane spans lie at 5–23 (IIIL…GRKV), 30–52 (ILGC…EVGF), 81–103 (LTVS…SIGY), 112–129 (RFFS…ILVT), 133–155 (YLLM…SFWF), 168–190 (FLTN…WSLG), 200–222 (LAPY…GAMA), 243–262 (VSAL…LLIR), 272–294 (TVLL…IGLF), 301–319 (IIAY…AIGL), 329–351 (LINH…HAVV), 364–386 (SFLP…FPFM), 409–431 (NVYF…VIYL), 452–471 (IFLS…FGYL), 511–528 (LLPF…IVYY), 535–557 (VVDF…RFLV), and 615–637 (YALY…SIFF).

The protein belongs to the complex I subunit 5 family.

Its subcellular location is the mitochondrion inner membrane. It carries out the reaction a ubiquinone + NADH + 5 H(+)(in) = a ubiquinol + NAD(+) + 4 H(+)(out). In terms of biological role, core subunit of the mitochondrial membrane respiratory chain NADH dehydrogenase (Complex I) that is believed to belong to the minimal assembly required for catalysis. Complex I functions in the transfer of electrons from NADH to the respiratory chain. The immediate electron acceptor for the enzyme is believed to be ubiquinone. The chain is NADH-ubiquinone oxidoreductase chain 5 (nd5) from Hypocrea jecorina (Trichoderma reesei).